The primary structure comprises 436 residues: MSEQNILKTPKGDRIAIVSGLRTPFAKQATAFHHVPALDMGKLVVNEMLERLNFNKSEIDQLVFGQVVQMPEAPNIAREIVLGTGMPVSVDAYSVSRACATSFQAIANVAESIMAGSVTVGIAGGADSSSVLPIGVSKKLAGSLVDLNKARTLGQRLKIFSKLRLKDLLPVPPAVAEYSTGLSMGQTAEQMAKTHNISREDQDALAHRSHSLATQAWADGKLKDEVMTAHLPPYKSFIEEDNNIRKNSTVEGYAKLKPVFDRQHGTVTAANATPLTDGAAAVLMMSESKAKALGYEILGYVRSFAFSAIGVEKDMLMGPAHATPIALDRAGITLADLDLIEMHEAFASQTLANMKMFASDKFAQEHLGRSKAIGEINMDKFNVLGGSLAYGHPFAATGARLITQSLYELKRRGGGLALTTACAAGGLGAAFVLESA.

Cys-99 serves as the catalytic Acyl-thioester intermediate. Catalysis depends on proton acceptor residues His-392 and Cys-422.

The protein belongs to the thiolase-like superfamily. Thiolase family. Heterotetramer of two alpha chains (FadJ) and two beta chains (FadI).

Its subcellular location is the cytoplasm. The enzyme catalyses an acyl-CoA + acetyl-CoA = a 3-oxoacyl-CoA + CoA. The protein operates within lipid metabolism; fatty acid beta-oxidation. In terms of biological role, catalyzes the final step of fatty acid oxidation in which acetyl-CoA is released and the CoA ester of a fatty acid two carbons shorter is formed. This chain is 3-ketoacyl-CoA thiolase, found in Pseudoalteromonas translucida (strain TAC 125).